Here is a 542-residue protein sequence, read N- to C-terminus: Chaperonin GroEL 2 (542 aa).

ATP contacts are provided by residues 30–33 (TLGP), Lys51, 87–91 (DGTTT), Gly415, and Asp496.

This sequence belongs to the chaperonin (HSP60) family. In terms of assembly, forms a cylinder of 14 subunits composed of two heptameric rings stacked back-to-back. Interacts with the co-chaperonin GroES.

It localises to the cytoplasm. The enzyme catalyses ATP + H2O + a folded polypeptide = ADP + phosphate + an unfolded polypeptide.. Functionally, together with its co-chaperonin GroES, plays an essential role in assisting protein folding. The GroEL-GroES system forms a nano-cage that allows encapsulation of the non-native substrate proteins and provides a physical environment optimized to promote and accelerate protein folding. This Rhizobium meliloti (strain 1021) (Ensifer meliloti) protein is Chaperonin GroEL 2.